The chain runs to 2283 residues: MAAQVAPAAASSLGNPPPPPSELKKAEQQQREEAGGEAAAAAAERGEMKAAAGQESEGPAVGPPQPLGKELQDGAESNGGGGGGGAGSGGGPGAEPDLKNSNGNAGPRPALNNNLPEPPGGGGGGGSSSSDGVGAPPHSAAAALPPPAYGFGQAYGRSPSAVAAAAAAVFHQQHGGQQSPGLAALQSGGGGGLEPYAGPQQNSHDHGFPNHQYNSYYPNRSAYPPPPQAYALSSPRGGTPGSGAAAAAGSKPPPSSSASASSSSSSFAQQRFGAMGGGGPSAAGGGTPQPTATPTLNQLLTSPSSARGYQGYPGGDYGGGPQDGGAGKGPADMASQCWGAAAAAAAAAAAVSGGAQQRSHHAPMSPGSSGGGGQPLARTPQSSSPMDQMGKMRPQPYGGTNPYSQQQGPPSGPQQGHGYPGQPYGSQTPQRYPMTMQGRAQSAMGSLSYAQQIPPYGQQGPSAYGQQGQTPYYNQQSPHPQQQPPYAQQPPSQTPHAQPSYQQQPQTQQPQLQSSQPPYSQQPSQPPHQQSPTPYPSQQSTTQQHPQSQPPYSQPQAQSPYQQQQPQQPASSSLSQQAAYPQPQPQQSQQTAYSQQRFPPPQELSQDSFGSQASSAPSMTSSKGGQEDMNLSLQSRPSSLPDLSGSIDDLPMGTEGALSPGVSTSGISSSQGEQSNPAQSPFSPHTSPHLPGIRGPSPSPVGSPASVAQSRSGPLSPAAVPGNQMPPRPPSGQSDSIMHPSMNQSSIAQDRGYMQRNPQMPQYTSPQPGSALSPRQPSGGQMHSGVGSYQQNSMGSYGPQGSQYGPQGGYPRQPNYNALPNANYPNAGMAGSMNPMGAGGQMHGQPGIPPYGTLPPGRMAHASMGNRPYGPNMANMPPQVGSGMCPPPGGMNRKTQESAVAMHVAANSIQNRPPGYPNMNQGGMMGTGPPYGQGINSMAGMINPQGPPYPMGGTMANNSAGMAASPEMMGLGDVKLTPATKMNNKADGTPKTESKSKKSSSSTTTNEKITKLYELGGEPERKMWVDRYLAFTEEKAMGMTNLPAVGRKPLDLYRLYVSVKEIGGLTQVNKNKKWRELATNLNVGTSSSAASSLKKQYIQCLYAFECKIERGEDPPPDIFAAADSKKSQPKIQPPSPAGSGSMQGPQTPQSTSSSMAEGGDLKPPTPASTPHSQIPPLPGMSRSNSVGIQDAFPDGSDPTFQKRNSMTPNPGYQPSMNTSDMMGRMSYEPNKDPYGSMRKAPGSDPFMSSGQGPNGGMGDPYSRAAGPGLGSVAMGPRQHYPYGGPYDRVRTEPGIGPEGNMGTGAPQPNLMPSTPDSGMYSPSRYPPQQQQQQQQQHDSYGNQFSTQGTPSSSPFPSQQTTMYQQQQQNYKRPMDGTYGPPAKRHEGEMYSVPYSAGQGQPQQQQLPAAQSQPASQPQAAQPSPQQDVYNQYSNAYPASATAATDRRPAGGPQNQFPFQFGRDRVSAPPGSSAQQNMPPQMMGGPIQASAEVAQQGTMWQGRNDMTYNYANRQNTGSATQGPAYHGVNRTDEMLHTDQRANHEGPWPSHGTRQPPYGPSAPVPPMTRPPPSNYQPPPSMPNHIPQVSSPAPLPRPMENRTSPSKSPFLHSGMKMQKAGPPVPASHIAPTPVQPPMIRRDITFPPGSVEATQPVLKQRRRLTMKDIGTPEAWRVMMSLKSGLLAESTWALDTINILLYDDNSIMTFNLSQLPGLLELLVEYFRRCLIEIFGILKEYEVGDPGQRTLLDPGRFTKVYSPAHTEEEEEEHLDPKLEEEEEEGVGNDEEMAFLGKDKPSSENNEEKLVSKFDKLPVKIVQRNDPFVVDCSDKLGRVQEFDSGLLHWRIGGGDTTEHIQTHFESKIELLPSRPYVPCPTPPRKHLTTVEGTPGTTEQEGPPPDGLPEKRITATMDDMLSTRSSTLTDEGAKSAEATKESSKFPFGISPAQSHRNIKILEDEPHSKDETPLCTLLDWQDSLAKRCVCVSNTIRSLSFVPGNDFEMSKHPGLLLILGKLILLHHKHPERKQAPLTYEKEEEQDQGVSCDKVEWWWDCLEMLRENTLVTLANISGQLDLSPYPESICLPVLDGLLHWAVCPSAEAQDPFSTLGPNAVLSPQRLVLETLSKLSIQDNNVDLILATPPFSRLEKLYSTMVRFLSDRKNPVCREMAVVLLANLAQGDSLAARAIAVQKGSIGNLLGFLEDSLAATQFQQSQASLLHMQNPPFEPTSVDMMRRAARALLALAKVDENHSEFTLYESRLLDISVSPLMNSLVSQVICDVLFLIGQS.

Residues 1 to 10 are compositionally biased toward low complexity; the sequence is MAAQVAPAAA. Disordered regions lie at residues 1–333, 346–822, and 979–1006; these read MAAQ…PADM, AAAA…LPNA, and ATKM…TTTN. Ala-2 carries the post-translational modification N-acetylalanine. The segment covering 22 to 34 has biased composition (basic and acidic residues); sequence ELKKAEQQQREEA. Phosphoserine is present on residues Ser-56 and Ser-77. Residues 77 to 93 are compositionally biased toward gly residues; the sequence is SNGGGGGGGAGSGGGPG. Composition is skewed to low complexity over residues 128–143 and 233–266; these read SSSD…AAAA and SSPR…SSSS. Phosphoserine is present on Ser-234. The segment covering 274–287 has biased composition (gly residues); the sequence is AMGGGGPSAAGGGT. Thr-287 carries the phosphothreonine modification. The short motif at 296–300 is the LXXLL element; the sequence is LNQLL. Polar residues predominate over residues 296 to 307; it reads LNQLLTSPSSAR. Ser-302 carries the post-translational modification Phosphoserine. Over residues 311 to 328 the composition is skewed to gly residues; sequence GYPGGDYGGGPQDGGAGK. Ser-365 and Ser-384 each carry phosphoserine. Low complexity predominate over residues 402–427; that stretch reads PYSQQQGPPSGPQQGHGYPGQPYGSQ. Arg-431 is modified (asymmetric dimethylarginine). 2 stretches are compositionally biased toward polar residues: residues 438 to 451 and 459 to 470; these read GRAQ…SYAQ and QGPSAYGQQGQT. 2 stretches are compositionally biased toward low complexity: residues 471–547 and 554–596; these read PYYN…QHPQ and QPQA…YSQQ. At Ser-605 the chain carries Phosphoserine. Residues 611 to 622 are compositionally biased toward low complexity; the sequence is SQASSAPSMTSS. The segment covering 629 to 638 has biased composition (polar residues); the sequence is MNLSLQSRPS. Low complexity predominate over residues 659 to 675; that stretch reads SPGVSTSGISSSQGEQS. Polar residues predominate over residues 676 to 686; the sequence is NPAQSPFSPHT. Phosphoserine is present on residues Ser-697, Ser-699, Ser-703, Ser-731, Ser-765, and Ser-773. Composition is skewed to polar residues over residues 731–748 and 756–794; these read SGQS…SSIA and RNPQ…QNSM. Residues 795-822 show a composition bias toward low complexity; it reads GSYGPQGSQYGPQGGYPRQPNYNALPNA. The ARID domain maps to 1018 to 1109; that stretch reads EPERKMWVDR…CLYAFECKIE (92 aa). Disordered regions lie at residues 1114–1484 and 1539–1636; these read PPPD…MMGG and RANH…PPMI. The segment covering 1142-1155 has biased composition (low complexity); that stretch reads MQGPQTPQSTSSSM. The span at 1163 to 1178 shows a compositional bias: pro residues; that stretch reads PPTPASTPHSQIPPLP. Residue Ser-1185 is modified to Phosphoserine. The segment covering 1198–1220 has biased composition (polar residues); sequence PTFQKRNSMTPNPGYQPSMNTSD. Ser-1236 is modified (phosphoserine). Residue Arg-1277 is modified to Omega-N-methylarginine. A compositionally biased stretch (low complexity) spans 1343–1368; the sequence is QFSTQGTPSSSPFPSQQTTMYQQQQQ. The Nuclear localization signal motif lies at 1369-1388; it reads NYKRPMDGTYGPPAKRHEGE. The segment covering 1395–1426 has biased composition (low complexity); sequence SAGQGQPQQQQLPAAQSQPASQPQAAQPSPQQ. Polar residues-rich tracts occupy residues 1427–1436 and 1469–1478; these read DVYNQYSNAY and PGSSAQQNMP. Pro residues predominate over residues 1555 to 1579; it reads PYGPSAPVPPMTRPPPSNYQPPPSM. The residue at position 1605 (Ser-1605) is a Phosphoserine. Lys-1613 carries the post-translational modification N6-acetyllysine. Positions 1710–1714 match the LXXLL motif; that stretch reads LPGLL. 3 disordered regions span residues 1757–1782, 1872–1904, and 1917–1941; these read PAHT…GVGN, CPTP…PEKR, and SSTL…PFGI. Acidic residues predominate over residues 1761 to 1782; that stretch reads EEEEEEHLDPKLEEEEEEGVGN. A phosphothreonine mark is found at Thr-1874 and Thr-1886. The segment covering 1882-1893 has biased composition (low complexity); it reads TVEGTPGTTEQE. Lys-1903 carries the post-translational modification N6-acetyllysine. Basic and acidic residues predominate over residues 1923–1935; the sequence is EGAKSAEATKESS. Phosphoserine occurs at positions 1927 and 1942. 2 consecutive short sequence motifs (LXXLL) follow at residues 1965 to 1969 and 2083 to 2087; these read LCTLL and LDGLL.

In terms of assembly, component of SWI/SNF chromatin remodeling complexes, in some of which it can be mutually exclusive with ARID1B/BAF250B. The canonical complex contains a catalytic subunit (either SMARCA4/BRG1/BAF190A or SMARCA2/BRM/BAF190B) and at least SMARCE1, ACTL6A/BAF53, SMARCC1/BAF155, SMARCC2/BAF170, and SMARCB1/SNF5/BAF47. Other subunits specific to each of the complexes may also be present permitting several possible combinations developmentally and tissue specific. Component of the BAF (SWI/SNF-A) complex, which includes at least actin (ACTB), ARID1A/BAF250A, ARID1B/BAF250B, SMARCA2/BRM, SMARCA4/BRG1/BAF190A, ACTL6A/BAF53, ACTL6B/BAF53B, SMARCE1/BAF57, SMARCC1/BAF155, SMARCC2/BAF170, SMARCB1/SNF5/INI1, and one or more SMARCD1/BAF60A, SMARCD2/BAF60B, or SMARCD3/BAF60C. In muscle cells, the BAF complex also contains DPF3. Component of neural progenitors-specific chromatin remodeling complex (npBAF complex) composed of at least, ARID1A/BAF250A or ARID1B/BAF250B, SMARCD1/BAF60A, SMARCD3/BAF60C, SMARCA2/BRM/BAF190B, SMARCA4/BRG1/BAF190A, SMARCB1/BAF47, SMARCC1/BAF155, SMARCE1/BAF57, SMARCC2/BAF170, PHF10/BAF45A, ACTL6A/BAF53A and actin. Component of neuron-specific chromatin remodeling complex (nBAF complex) composed of at least, ARID1A/BAF250A or ARID1B/BAF250B, SMARCD1/BAF60A, SMARCD3/BAF60C, SMARCA2/BRM/BAF190B, SMARCA4/BRG1/BAF190A, SMARCB1/BAF47, SMARCC1/BAF155, SMARCE1/BAF57, SMARCC2/BAF170, DPF1/BAF45B, DPF3/BAF45C, ACTL6B/BAF53B and actin. Component of a SWI/SNF-like EBAFa complex, at least composed of SMARCA4/BRG1/BAF190A, SMARCB1/BAF47/SNF5, ACTL6A/BAF53A, SMARCE1/BAF57, SMARCD1/BAF60A, SMARCC1/BAF155, SMARCC2/BAF170, BAF250A and MLLT1/ENL. Interacts through its C-terminus with SMARCA2/BRM/BAF190B and SMARCA4/BRG1/BAF190A. Interacts with SMARCC1/BAF155. Interacts with FOS (via bZIP domain and leucine-zipper region), FOSB isoform 1 and 2, FOSL1 and FOSL2. As to expression, widely expressed. Expressed at high levels in the testis.

The protein resides in the nucleus. Its function is as follows. Involved in transcriptional activation and repression of select genes by chromatin remodeling (alteration of DNA-nucleosome topology). Component of SWI/SNF chromatin remodeling complexes that carry out key enzymatic activities, changing chromatin structure by altering DNA-histone contacts within a nucleosome in an ATP-dependent manner. Binds DNA non-specifically. Belongs to the neural progenitors-specific chromatin remodeling complex (npBAF complex) and the neuron-specific chromatin remodeling complex (nBAF complex). During neural development a switch from a stem/progenitor to a postmitotic chromatin remodeling mechanism occurs as neurons exit the cell cycle and become committed to their adult state. The transition from proliferating neural stem/progenitor cells to postmitotic neurons requires a switch in subunit composition of the npBAF and nBAF complexes. As neural progenitors exit mitosis and differentiate into neurons, npBAF complexes which contain ACTL6A/BAF53A and PHF10/BAF45A, are exchanged for homologous alternative ACTL6B/BAF53B and DPF1/BAF45B or DPF3/BAF45C subunits in neuron-specific complexes (nBAF). The npBAF complex is essential for the self-renewal/proliferative capacity of the multipotent neural stem cells. The nBAF complex along with CREST plays a role regulating the activity of genes essential for dendrite growth. This Mus musculus (Mouse) protein is AT-rich interactive domain-containing protein 1A (Arid1a).